Reading from the N-terminus, the 433-residue chain is Legumain (433 aa).

A signal peptide spans 1–17 (MIWEFTVLLSLVLGTGA). Residues 18–25 (VPLEDPED) constitute a propeptide that is removed on maturation. Asparagine 91 carries N-linked (GlcNAc...) asparagine glycosylation. The active site involves histidine 148. An N-linked (GlcNAc...) asparagine glycan is attached at asparagine 167. Cysteine 189 acts as the Nucleophile in catalysis. Asparagine 263 and asparagine 272 each carry an N-linked (GlcNAc...) asparagine glycan. Residues 324–433 (DLQESRRLVQ…SMNKVCHGYY (110 aa)) constitute a propeptide that is removed on maturation. Cystine bridges form between cysteine 378/cysteine 412 and cysteine 390/cysteine 429.

The protein belongs to the peptidase C13 family. Homodimer before autocatalytic removal of the propeptide. Monomer after autocatalytic processing. May interact with integrins. In terms of processing, activated by autocatalytic processing at pH 4. As to expression, detected in kidney (at protein level).

The protein resides in the lysosome. The catalysed reaction is Hydrolysis of proteins and small molecule substrates at -Asn-|-Xaa- bonds.. In terms of biological role, has a strict specificity for hydrolysis of asparaginyl bonds. Can also cleave aspartyl bonds slowly, especially under acidic conditions. Involved in the processing of proteins for MHC class II antigen presentation in the lysosomal/endosomal system. Also involved in MHC class I antigen presentation in cross-presenting dendritic cells by mediating cleavage and maturation of Perforin-2 (MPEG1), thereby promoting antigen translocation in the cytosol. Required for normal lysosomal protein degradation in renal proximal tubules. Required for normal degradation of internalized EGFR. Plays a role in the regulation of cell proliferation via its role in EGFR degradation. This chain is Legumain (LGMN), found in Bos taurus (Bovine).